Here is a 309-residue protein sequence, read N- to C-terminus: Foldase protein PrsA (309 aa).

A signal peptide spans 1–22 (MKTRSKLAAGFLTLMSVATLAA). Cys-23 carries N-palmitoyl cysteine lipidation. The S-diacylglycerol cysteine moiety is linked to residue Cys-23. Residues 146–241 (TPETSVQVIK…TSYYIIKVTD (96 aa)) form the PpiC domain.

It belongs to the PrsA family.

It localises to the cell membrane. The enzyme catalyses [protein]-peptidylproline (omega=180) = [protein]-peptidylproline (omega=0). Its function is as follows. Plays a major role in protein secretion by helping the post-translocational extracellular folding of several secreted proteins. The sequence is that of Foldase protein PrsA from Streptococcus agalactiae serotype III (strain NEM316).